We begin with the raw amino-acid sequence, 610 residues long: Elongation factor 4 (610 aa).

Residues 13–195 form the tr-type G domain; it reads SHIRNFSIVA…AIVRKLPAPK (183 aa). Residues 25 to 30 and 142 to 145 contribute to the GTP site; these read DHGKST and NKID.

Belongs to the TRAFAC class translation factor GTPase superfamily. Classic translation factor GTPase family. LepA subfamily.

Its subcellular location is the cell inner membrane. The enzyme catalyses GTP + H2O = GDP + phosphate + H(+). Required for accurate and efficient protein synthesis under certain stress conditions. May act as a fidelity factor of the translation reaction, by catalyzing a one-codon backward translocation of tRNAs on improperly translocated ribosomes. Back-translocation proceeds from a post-translocation (POST) complex to a pre-translocation (PRE) complex, thus giving elongation factor G a second chance to translocate the tRNAs correctly. Binds to ribosomes in a GTP-dependent manner. The sequence is that of Elongation factor 4 from Rhizobium etli (strain CIAT 652).